Here is a 132-residue protein sequence, read N- to C-terminus: Glycine cleavage system H protein (132 aa).

The region spanning 24-107 (TATIGLSAFA…GEEGWLIKVR (84 aa)) is the Lipoyl-binding domain. N6-lipoyllysine is present on K65.

The protein belongs to the GcvH family. As to quaternary structure, the glycine cleavage system is composed of four proteins: P, T, L and H. (R)-lipoate is required as a cofactor.

The glycine cleavage system catalyzes the degradation of glycine. The H protein shuttles the methylamine group of glycine from the P protein to the T protein. This is Glycine cleavage system H protein from Synechocystis sp. (strain ATCC 27184 / PCC 6803 / Kazusa).